A 234-amino-acid polypeptide reads, in one-letter code: Opacity protein opA55 (234 aa).

A signal peptide is located at residue A1.

Belongs to the opacity porin family.

The protein localises to the cell outer membrane. Functionally, implicated in a number of adherence functions. OPA proteins are implicated in pathogenesis and are subject to phase variation. This is Opacity protein opA55 (opaE) from Neisseria gonorrhoeae.